We begin with the raw amino-acid sequence, 129 residues long: Histone H2A (129 aa).

Belongs to the histone H2A family. In terms of assembly, the nucleosome is a histone octamer containing two molecules each of H2A, H2B, H3 and H4 assembled in one H3-H4 heterotetramer and two H2A-H2B heterodimers. The octamer wraps approximately 147 bp of DNA.

The protein localises to the nucleus. It localises to the chromosome. In terms of biological role, core component of nucleosome. Nucleosomes wrap and compact DNA into chromatin, limiting DNA accessibility to the cellular machineries which require DNA as a template. Histones thereby play a central role in transcription regulation, DNA repair, DNA replication and chromosomal stability. DNA accessibility is regulated via a complex set of post-translational modifications of histones, also called histone code, and nucleosome remodeling. This is Histone H2A (H2A-II) from Chlamydomonas reinhardtii (Chlamydomonas smithii).